Here is a 179-residue protein sequence, read N- to C-terminus: MLEVLILAFALSMDAFAVSIGLGIKNKQNLKALALKAGLFFGIFQALMPFLGFLGGIGLREYIQGYDKIVAFILLLAIGGKMIYEAFNENVEEEISQITNKILLTLAIATSLDAMAAGYSLHLFNLNIYLSLFVIGFTTFIISYIGVYVGSRGGEKYESKAEILGGVVLILIGLKILLF.

Transmembrane regions (helical) follow at residues 4 to 24 (VLIL…GLGI), 39 to 59 (LFFG…GIGL), 69 to 89 (IVAF…AFNE), 102 to 122 (ILLT…YSLH), 128 to 148 (IYLS…IGVY), and 159 to 179 (SKAE…ILLF).

It belongs to the MntP (TC 9.B.29) family.

The protein localises to the cell inner membrane. Its function is as follows. Probably functions as a manganese efflux pump. The protein is Putative manganese efflux pump MntP of Aliarcobacter butzleri (strain RM4018) (Arcobacter butzleri).